Reading from the N-terminus, the 368-residue chain is F-box only protein 28 (368 aa).

Basic and acidic residues predominate over residues 1 to 11; sequence MAAAAEERMAE. Positions 1-56 are disordered; it reads MAAAAEERMAEEGGGGQGDGGSSLASGSTQRQPPPPAPQHPQPGSQALPAPALAPD. Gly residues predominate over residues 12–21; the sequence is EGGGGQGDGG. Low complexity predominate over residues 22 to 31; it reads SSLASGSTQR. Positions 32–41 are enriched in pro residues; that stretch reads QPPPPAPQHP. Over residues 42 to 56 the composition is skewed to low complexity; it reads QPGSQALPAPALAPD. The F-box domain occupies 61 to 109; it reads NNTLVALPIVAIENILSFMSYDEISQLRLVCKRMDLVCQRMLNQGFLKV. Serine 235 and serine 242 each carry phosphoserine. Position 270 is a phosphothreonine (threonine 270). Positions 328 to 368 are disordered; it reads MESAVGNSSGSGQNEESPRKRKKATEAIDSLRKSKRLRNRK. Residues 333–342 are compositionally biased toward low complexity; it reads GNSSGSGQNE. Serine 344 is subject to Phosphoserine.

Part of a SCF (SKP1-cullin-F-box) protein ligase complex.

It localises to the chromosome. It is found in the centromere. The protein resides in the kinetochore. Its function is as follows. Probably recognizes and binds to some phosphorylated proteins and promotes their ubiquitination and degradation. This is F-box only protein 28 (FBXO28) from Homo sapiens (Human).